The following is a 388-amino-acid chain: Chorismate synthase (388 aa).

Residues Arg39 and Arg45 each contribute to the NADP(+) site. FMN is bound by residues 130 to 132 (RSS), 251 to 252 (NA), Gly296, 311 to 315 (KPIPT), and Arg337.

This sequence belongs to the chorismate synthase family. Homotetramer. The cofactor is FMNH2.

It catalyses the reaction 5-O-(1-carboxyvinyl)-3-phosphoshikimate = chorismate + phosphate. It participates in metabolic intermediate biosynthesis; chorismate biosynthesis; chorismate from D-erythrose 4-phosphate and phosphoenolpyruvate: step 7/7. Functionally, catalyzes the anti-1,4-elimination of the C-3 phosphate and the C-6 proR hydrogen from 5-enolpyruvylshikimate-3-phosphate (EPSP) to yield chorismate, which is the branch point compound that serves as the starting substrate for the three terminal pathways of aromatic amino acid biosynthesis. This reaction introduces a second double bond into the aromatic ring system. The polypeptide is Chorismate synthase (Streptococcus suis (strain 98HAH33)).